A 245-amino-acid chain; its full sequence is 1-(5-phosphoribosyl)-5-[(5-phosphoribosylamino)methylideneamino] imidazole-4-carboxamide isomerase (245 aa).

Aspartate 7 functions as the Proton acceptor in the catalytic mechanism. The Proton donor role is filled by aspartate 129.

Belongs to the HisA/HisF family.

Its subcellular location is the cytoplasm. It catalyses the reaction 1-(5-phospho-beta-D-ribosyl)-5-[(5-phospho-beta-D-ribosylamino)methylideneamino]imidazole-4-carboxamide = 5-[(5-phospho-1-deoxy-D-ribulos-1-ylimino)methylamino]-1-(5-phospho-beta-D-ribosyl)imidazole-4-carboxamide. It participates in amino-acid biosynthesis; L-histidine biosynthesis; L-histidine from 5-phospho-alpha-D-ribose 1-diphosphate: step 4/9. This Escherichia coli O6:K15:H31 (strain 536 / UPEC) protein is 1-(5-phosphoribosyl)-5-[(5-phosphoribosylamino)methylideneamino] imidazole-4-carboxamide isomerase.